The primary structure comprises 715 residues: Probable ubiquitin thioesterase DG1039 (715 aa).

Residues 86-302 are a coiled coil; the sequence is KSRNEIKRKA…NNQTDDKLDN (217 aa). Over residues 287-302 the composition is skewed to basic and acidic residues; the sequence is NKKLENNNQTDDKLDN. Disordered stretches follow at residues 287–367, 398–450, and 502–527; these read NKKL…YNST, QYKQ…QQQY, and LAQSPAVNTPSITPTTNKPNIDSSEA. Residues 339 to 349 show a composition bias toward polar residues; the sequence is TTAQLPLSITQ. Residues 398–409 show a composition bias toward low complexity; that stretch reads QYKQQQQQQPIQ. 2 stretches are compositionally biased toward polar residues: residues 410–427 and 502–525; these read SPTNNINRPNIPQYNNYN and LAQSPAVNTPSITPTTNKPNIDSS. The MPN domain maps to 537-666; that stretch reads IIVHGEVFQE…IFRLTDPPGL (130 aa). Positions 615, 617, 628, 630, 672, 678, and 680 each coordinate Zn(2+). The JAMM motif signature appears at 615-628; that stretch reads HTHPTQDCFLSAVD.

The protein belongs to the peptidase M67C family. It depends on Zn(2+) as a cofactor.

In terms of biological role, may be a zinc metalloprotease that specifically cleaves ubiquitin chains. In Dictyostelium discoideum (Social amoeba), this protein is Probable ubiquitin thioesterase DG1039 (DG1039).